Here is a 338-residue protein sequence, read N- to C-terminus: Penicillin V acylase (338 aa).

Positions 1–3 are cleaved as a propeptide — removed in mature form; it reads MLG. The Nucleophile role is filled by Cys-4.

Belongs to the peptidase C59 family. Homotetramer. Post-translationally, expressed as an inactive precursor that is cleaved autocatalytically at Gly-3/Cys-4 to generate an active enzyme. Processing exposes a catalytic N-terminal nucleophile residue with a free alpha amino group.

The enzyme catalyses a penicillin + H2O = 6-aminopenicillanate + a carboxylate. Its activity is regulated as follows. Hydrolase activity is rapidly inhibited by lysine modifying reagents. Functionally, catalyzes the hydrolysis of penicillin V to 6-aminopenicillanate (6-APA). Exhibits high specificity for penicillin V. Penicillin G and other related compounds are hydrolyzed at less than 10% of the rate of penicillin V. Among the cephalosporins, cephalosporin C is resistant to cleavage, whereas cephalosporin G is cleaved at about 1% of the rate of cleavage of penicillin V. The protein is Penicillin V acylase of Lysinibacillus sphaericus (Bacillus sphaericus).